Here is a 133-residue protein sequence, read N- to C-terminus: Probable nuclear transport factor 2 (133 aa).

Residues 10-128 (VAKAFIQHYY…YFIGNEIFRL (119 aa)) form the NTF2 domain.

It is found in the cytoplasm. Facilitates protein transport into the nucleus. Could be part of a multicomponent system of cytosolic factors that assemble at the pore complex during nuclear import. This is Probable nuclear transport factor 2 (ran-4) from Caenorhabditis elegans.